A 638-amino-acid polypeptide reads, in one-letter code: Meiosis initiator protein (638 aa).

5 disordered regions span residues Met1–Pro21, Asn60–Thr79, Leu138–Gln249, Pro404–Arg433, and Gly447–Pro537. The span at Tyr7–Gly20 shows a compositional bias: polar residues. A basic motif; degenerate region spans residues Arg62–Arg75. A bHLH domain is found at Arg62 to Leu116. Residues Lys76–Leu116 are helix-loop-helix motif. Residues Thr157–Ser167 show a composition bias toward low complexity. Polar residues predominate over residues Thr182–Thr191. A compositionally biased stretch (basic and acidic residues) spans Pro412–Ser430. Low complexity predominate over residues Ser453–Ser465. Residues Lys528–Pro537 show a composition bias toward basic residues. Positions Lys540–Gly608 form a DNA-binding region, HMG box.

In terms of assembly, interacts with STRA8.

Its subcellular location is the nucleus. Functionally, gatekeeper of meiotic initiation in both male and female germ cells. In complex with STRA8, directly activates the transcription of a subset of critical meiotic genes playing a central role in cell-cycle switching from mitosis to meiosis. Temporal expression of MEIOSIN is required for meiotic entry decision. In Homo sapiens (Human), this protein is Meiosis initiator protein.